Reading from the N-terminus, the 61-residue chain is Large ribosomal subunit protein bL33 (61 aa).

It belongs to the bacterial ribosomal protein bL33 family.

This is Large ribosomal subunit protein bL33 from Amoebophilus asiaticus (strain 5a2).